The primary structure comprises 469 residues: Tetratricopeptide repeat protein 38 (469 aa).

TPR repeat units lie at residues 107-140 (REML…HPTD), 179-212 (SYVK…DQTD), and 251-284 (CHVY…QCFA).

Belongs to the TTC38 family.

The chain is Tetratricopeptide repeat protein 38 (ttc38) from Xenopus tropicalis (Western clawed frog).